The sequence spans 1040 residues: Exosome RNA helicase MTR4 (1040 aa).

Alanine 2 bears the N-acetylalanine mark. Residues 16 to 77 are disordered; the sequence is DSTSAAGAKK…GTDEPIFGKK (62 aa). Over residues 23–33 the composition is skewed to basic and acidic residues; it reads AKKDKEKEKWK. Lysine 24 is covalently cross-linked (Glycyl lysine isopeptide (Lys-Gly) (interchain with G-Cter in SUMO2)). Serine 38 carries the phosphoserine modification. The span at 41-50 shows a compositional bias: basic and acidic residues; that stretch reads KAGKRLDTKL. N6-acetyllysine occurs at positions 49 and 76. Residues isoleucine 137, 159–166, serine 162, glycine 164, lysine 165, and threonine 166 contribute to the ATP site; that span reads AHTSAGKT. The Helicase ATP-binding domain occupies 146 to 302; that stretch reads IQCVDNNQSV…WICHLHKQPC (157 aa). The short motif at 250–253 is the DEIH box element; it reads DEIH. Lysine 356 participates in a covalent cross-link: Glycyl lysine isopeptide (Lys-Gly) (interchain with G-Cter in SUMO2). Residues 403–575 form the Helicase C-terminal domain; the sequence is QMTKLDFNTD…NMVLNLLRVE (173 aa). Residues lysine 682 and lysine 721 each participate in a glycyl lysine isopeptide (Lys-Gly) (interchain with G-Cter in SUMO2) cross-link.

Belongs to the helicase family. SKI2 subfamily. In terms of assembly, component of a TRAMP-like complex, an ATP-dependent exosome regulatory complex consisting of a helicase (MTREX), an oligadenylate polymerase (TENT4B or TENT4A), and a substrate specific RNA-binding factor (ZCCHC7 or ZCCHC8). Several TRAMP-like complexes exist with specific compositions and are associated with nuclear, or nucleolar RNA exosomes. Identified in the spliceosome C complex. Component of the poly(A) tail exosome targeting (PAXT) complex made of PABPN1, ZFC3H1 and MTREX that directs a subset of long and polyadenylated poly(A) RNAs for exosomal degradation. Component of the nuclear exosome targeting (NEXT) complex composed of MTREX, ZCCHC8, and RBM7 that directs a subset of non-coding short-lived RNAs for exosomal degradation. Interacts with ZCCHC8; this interaction bridges the interaction between RBM7 and MTREX. Binds to ZFC3H1 and RBM7 in a RNase-insensitive manner. Interacts with EXOSC10; the interaction mediates the association of MTREX with nuclear RNA exosomes. Interacts with isoform 1 of NVL in an ATP-dependent manner; the interaction is required to associate NVL with nuclear RNA exosome. Interacts with WDR74; the interaction dissociation in a late stage of rRNA synthesis is required for appropriate maturation of pre-60S particles and depends on the ATPase activity of NVL. Interacts with MPHOSPH6. Interacts with the RNA cap-binding complex proteins NCBP1 and SRRT. Interacts with NRDE2; the interaction is direct and negatively regulates MTREX function in exosomal degradation by changing its conformation precluding interaction with ZFC3H1, the RNA cap-binding complex proteins NCBP1 and SRRT, and association with the exosome. Associates with the RNA exosome complex.

The protein localises to the nucleus. The protein resides in the nucleoplasm. It localises to the nucleolus. Its subcellular location is the nucleus speckle. The catalysed reaction is ATP + H2O = ADP + phosphate + H(+). Activated when MTREX is incorporated into NEXT complex an the nuclear RNA exosome complex. In terms of biological role, catalyzes the ATP-dependent unwinding of RNA duplexes with a single-stranded 3' RNA extension. Central subunit of many protein complexes, namely TRAMP-like, nuclear exosome targeting (NEXT) and poly(A) tail exosome targeting (PAXT). NEXT functions as an RNA exosome cofactor that directs a subset of non-coding short-lived RNAs for exosomal degradation. NEXT is involved in surveillance and turnover of aberrant transcripts and non-coding RNAs. PAXT directs a subset of long and polyadenylated poly(A) RNAs for exosomal degradation. The RNA exosome is fundamental for the degradation of RNA in eukaryotic nuclei. Substrate targeting is facilitated by its cofactor ZCCHC8, which links to RNA-binding protein adapters. Associated with the RNA exosome complex and involved in the 3'-processing of the 7S pre-RNA to the mature 5.8S rRNA. May be involved in pre-mRNA splicing. In the context of NEXT complex can also in vitro unwind DNA:RNA heteroduplexes with a 3' poly (A) RNA tracking strand. Can promote unwinding and degradation of structured RNA substrates when associated with the nuclear exosome and its cofactors. Can displace a DNA strand while translocating on RNA to ultimately degrade the RNA within a DNA/RNA heteroduplex. Plays a role in DNA damage response. This is Exosome RNA helicase MTR4 from Mus musculus (Mouse).